A 486-amino-acid chain; its full sequence is Ribulose bisphosphate carboxylase large chain (486 aa).

2 residues coordinate substrate: N125 and T175. The active-site Proton acceptor is K177. K179 provides a ligand contact to substrate. Mg(2+) is bound by residues K203, D205, and E206. At K203 the chain carries N6-carboxylysine. The active-site Proton acceptor is H295. Residues R296, H328, and S380 each coordinate substrate.

This sequence belongs to the RuBisCO large chain family. Type I subfamily. In terms of assembly, heterohexadecamer of 8 large chains and 8 small chains. Mg(2+) is required as a cofactor.

It carries out the reaction 2 (2R)-3-phosphoglycerate + 2 H(+) = D-ribulose 1,5-bisphosphate + CO2 + H2O. It catalyses the reaction D-ribulose 1,5-bisphosphate + O2 = 2-phosphoglycolate + (2R)-3-phosphoglycerate + 2 H(+). Its function is as follows. RuBisCO catalyzes two reactions: the carboxylation of D-ribulose 1,5-bisphosphate, the primary event in carbon dioxide fixation, as well as the oxidative fragmentation of the pentose substrate. Both reactions occur simultaneously and in competition at the same active site. This Aurantimonas manganoxydans (strain ATCC BAA-1229 / DSM 21871 / SI85-9A1) protein is Ribulose bisphosphate carboxylase large chain.